The primary structure comprises 218 residues: E3 ubiquitin-protein ligase MARCHF3 (218 aa).

Residues 63 to 123 (SPFNDRPMCR…ELCHFRFAVE (61 aa)) form an RING-CH-type zinc finger. Zn(2+)-binding residues include cysteine 71, cysteine 74, cysteine 87, cysteine 89, histidine 97, cysteine 100, cysteine 113, and cysteine 116. 2 helical membrane passes run 145–165 (LFGD…SGWL) and 180–200 (LEAV…LFWT).

Interacts with MARCHF2 and STX6.

It is found in the cytoplasmic vesicle membrane. The protein localises to the early endosome membrane. The catalysed reaction is S-ubiquitinyl-[E2 ubiquitin-conjugating enzyme]-L-cysteine + [acceptor protein]-L-lysine = [E2 ubiquitin-conjugating enzyme]-L-cysteine + N(6)-ubiquitinyl-[acceptor protein]-L-lysine.. The protein operates within protein modification; protein ubiquitination. In terms of biological role, E3 ubiquitin-protein ligase which may be involved in endosomal trafficking. E3 ubiquitin ligases accept ubiquitin from an E2 ubiquitin-conjugating enzyme in the form of a thioester and then directly transfer the ubiquitin to targeted substrates. The chain is E3 ubiquitin-protein ligase MARCHF3 (Marchf3) from Mus musculus (Mouse).